Reading from the N-terminus, the 285-residue chain is uncharacterized protein (285 aa).

Transmembrane regions (helical) follow at residues 6–26, 38–58, 84–104, 110–130, 153–173, 176–196, and 236–256; these read YLVV…TPLI, VFAA…YIFP, IFLL…IFLR, GVLA…ELIF, FMMH…DDGF, ISFF…ALMV, and LIFG…TVLV.

The protein localises to the cell membrane. This is an uncharacterized protein from Mycoplasma pneumoniae (strain ATCC 29342 / M129 / Subtype 1) (Mycoplasmoides pneumoniae).